The following is a 125-amino-acid chain: Small ribosomal subunit protein uS12 (125 aa).

D89 carries the post-translational modification 3-methylthioaspartic acid.

It belongs to the universal ribosomal protein uS12 family. In terms of assembly, part of the 30S ribosomal subunit. Contacts proteins S8 and S17. May interact with IF1 in the 30S initiation complex.

Functionally, with S4 and S5 plays an important role in translational accuracy. In terms of biological role, interacts with and stabilizes bases of the 16S rRNA that are involved in tRNA selection in the A site and with the mRNA backbone. Located at the interface of the 30S and 50S subunits, it traverses the body of the 30S subunit contacting proteins on the other side and probably holding the rRNA structure together. The combined cluster of proteins S8, S12 and S17 appears to hold together the shoulder and platform of the 30S subunit. This is Small ribosomal subunit protein uS12 from Cupriavidus pinatubonensis (strain JMP 134 / LMG 1197) (Cupriavidus necator (strain JMP 134)).